Here is an 89-residue protein sequence, read N- to C-terminus: Small ribosomal subunit protein uS15 (89 aa).

The protein belongs to the universal ribosomal protein uS15 family. Part of the 30S ribosomal subunit. Forms a bridge to the 50S subunit in the 70S ribosome, contacting the 23S rRNA.

Functionally, one of the primary rRNA binding proteins, it binds directly to 16S rRNA where it helps nucleate assembly of the platform of the 30S subunit by binding and bridging several RNA helices of the 16S rRNA. Forms an intersubunit bridge (bridge B4) with the 23S rRNA of the 50S subunit in the ribosome. The sequence is that of Small ribosomal subunit protein uS15 from Lactiplantibacillus plantarum (strain ATCC BAA-793 / NCIMB 8826 / WCFS1) (Lactobacillus plantarum).